The sequence spans 376 residues: MAQKQKCVAMLLAGGKGSRLSALTKNLAKPAVPFGGKYRIIDFTLSNCANSGIETVGILTQYQPLELHNYIGIGNAWDLDRVSGGVTVLPPYAESSGVKWYTGTASAIYQNLNYLSQYEPEYVLILSGDHIYKMDYSKMLDYHIEKESDVSISVIEVPWDEASRFGIMNTNEEMEIVEFEEKPQFPRSNLASMGIYIFNWSILKEYLEMDARNPESSNDFGKDVLPLLLDEGKKLMAYPFEGYWKDVGTVKSLWEANMDLLRDETSLNLNDRNWRIYSVNPNEPPQYIAEKAKVEESLINEGCVIEGDVKHSVLFQGVTVEEGSMVIDSVVMPGAKIGKNVVIERAIVGSEMVIEDGTIIRPEKNVDDVVLIAEGK.

Alpha-D-glucose 1-phosphate contacts are provided by residues Tyr-101, Gly-166, 181-182, and Ser-192; that span reads EK.

The protein belongs to the bacterial/plant glucose-1-phosphate adenylyltransferase family. As to quaternary structure, homotetramer.

The catalysed reaction is alpha-D-glucose 1-phosphate + ATP + H(+) = ADP-alpha-D-glucose + diphosphate. Its pathway is glycan biosynthesis; glycogen biosynthesis. In terms of biological role, involved in the biosynthesis of ADP-glucose, a building block required for the elongation reactions to produce glycogen. Catalyzes the reaction between ATP and alpha-D-glucose 1-phosphate (G1P) to produce pyrophosphate and ADP-Glc. In Bacillus cereus (strain ATCC 14579 / DSM 31 / CCUG 7414 / JCM 2152 / NBRC 15305 / NCIMB 9373 / NCTC 2599 / NRRL B-3711), this protein is Glucose-1-phosphate adenylyltransferase.